The primary structure comprises 353 residues: MLSKVRIALDAMGGDVGPAVVIPGAAISLQRHSATEFLLVGDRARIEPELEKHPALKAASRIVHTDVAVSGSDKPSQALRRGRRTSSMWLAIDAVKKGEADVAVSAGNTGALMAMSRFHLRTLPGIDRPAITGIWPTKRGESVVLDLGATIGGDAHHLVSLAVMGAAMASVLFNKPRPTVGLLNIGAEEIKGHEEIREASEILRARNLPELDYIGFVEGDGIGKGLADVIVAEGFSGNIALKAAEGTARQMAELLRNEMQRSWLSKLGYLFARSAFQALRDKMDPNKSNGGVFLGLNGLVVKSHGGTSAEGFAYAIDVGYEMAHYDLLNKINQMLNREGGALNSVQAAQEAVS.

It belongs to the PlsX family. As to quaternary structure, homodimer. Probably interacts with PlsY.

It localises to the cytoplasm. It catalyses the reaction a fatty acyl-[ACP] + phosphate = an acyl phosphate + holo-[ACP]. It participates in lipid metabolism; phospholipid metabolism. Catalyzes the reversible formation of acyl-phosphate (acyl-PO(4)) from acyl-[acyl-carrier-protein] (acyl-ACP). This enzyme utilizes acyl-ACP as fatty acyl donor, but not acyl-CoA. This Bradyrhizobium diazoefficiens (strain JCM 10833 / BCRC 13528 / IAM 13628 / NBRC 14792 / USDA 110) protein is Phosphate acyltransferase.